Here is a 215-residue protein sequence, read N- to C-terminus: Cytochrome b6 (215 aa).

A helical membrane pass occupies residues 32–52 (IFYCLGGIVFVSFLIQVATGF). Heme c is bound at residue Cys35. Residues His86 and His100 each contribute to the heme b site. Transmembrane regions (helical) follow at residues 90 to 110 (VSMM…TGGF), 116 to 136 (LTWV…VTGY), and 186 to 206 (LHTF…FLMI). Heme b contacts are provided by His187 and His202.

The protein belongs to the cytochrome b family. PetB subfamily. The 4 large subunits of the cytochrome b6-f complex are cytochrome b6, subunit IV (17 kDa polypeptide, PetD), cytochrome f and the Rieske protein, while the 4 small subunits are PetG, PetL, PetM and PetN. The complex functions as a dimer. Requires heme b as cofactor. It depends on heme c as a cofactor.

Its subcellular location is the plastid. The protein localises to the chloroplast thylakoid membrane. Functionally, component of the cytochrome b6-f complex, which mediates electron transfer between photosystem II (PSII) and photosystem I (PSI), cyclic electron flow around PSI, and state transitions. The protein is Cytochrome b6 of Pyropia yezoensis (Susabi-nori).